The sequence spans 213 residues: Thymidylate kinase (213 aa).

7–14 (GMDGSGKT) is an ATP binding site.

This sequence belongs to the thymidylate kinase family.

It catalyses the reaction dTMP + ATP = dTDP + ADP. Its function is as follows. Phosphorylation of dTMP to form dTDP in both de novo and salvage pathways of dTTP synthesis. The protein is Thymidylate kinase of Mycoplasma capricolum subsp. capricolum (strain California kid / ATCC 27343 / NCTC 10154).